The chain runs to 833 residues: Leucine--tRNA ligase (833 aa).

The 'HIGH' region motif lies at 41-52 (PYPSGAGLHVGH). The short motif at 610–614 (KMSKS) is the 'KMSKS' region element. Lys-613 lines the ATP pocket.

The protein belongs to the class-I aminoacyl-tRNA synthetase family.

Its subcellular location is the cytoplasm. It carries out the reaction tRNA(Leu) + L-leucine + ATP = L-leucyl-tRNA(Leu) + AMP + diphosphate. The protein is Leucine--tRNA ligase of Streptococcus agalactiae serotype III (strain NEM316).